The following is a 346-amino-acid chain: Dynein regulatory complex protein 9 (346 aa).

Over residues 299–308 (MEKEQREKNA) the composition is skewed to basic and acidic residues. The tract at residues 299–346 (MEKEQREKNAATKIQAWWRGTLVRKGPRSKKADKSKKKDGKKGKKKRK) is disordered. In terms of domain architecture, IQ spans 305 to 334 (EKNAATKIQAWWRGTLVRKGPRSKKADKSK). Basic residues predominate over residues 323–346 (KGPRSKKADKSKKKDGKKGKKKRK).

Belongs to the DRC9 family. Component of the nexin-dynein regulatory complex (N-DRC). Interacts (via IQ domain) with calmodulin when calcium levels are low. Does not interact with calmodulin in the presence of Ca(2+). Interacts with hsp70 and may form a complex with camk4 and hsp70. As to expression, detected in adult testis, and at lower levels in brain, kidney and ovary.

The protein localises to the cytoplasm. The protein resides in the cell projection. It localises to the cilium. Its subcellular location is the flagellum. It is found in the cytoskeleton. The protein localises to the flagellum axoneme. Its function is as follows. Component of the nexin-dynein regulatory complex (N-DRC), a key regulator of ciliary/flagellar motility which maintains the alignment and integrity of the distal axoneme and regulates microtubule sliding in motile axonemes. Binds calmodulin when cellular Ca(2+) levels are low and thereby contributes to the regulation of calcium and calmodulin-dependent protein kinase IV (camk4) activity; contributes to the regulation of camk4 signaling cascades. Plays a role in the regulation of definitive hematopoiesis via its effects on camk4. The chain is Dynein regulatory complex protein 9 from Danio rerio (Zebrafish).